We begin with the raw amino-acid sequence, 334 residues long: Putative lysine N-acyltransferase C17G9.06c (334 aa).

Histidine 248 is a substrate binding site. Glutamate 286 acts as the Proton acceptor in catalysis.

The protein belongs to the lysine N-acyltransferase mbtK family.

Its subcellular location is the cytoplasm. The protein localises to the nucleus. This chain is Putative lysine N-acyltransferase C17G9.06c, found in Schizosaccharomyces pombe (strain 972 / ATCC 24843) (Fission yeast).